The chain runs to 112 residues: Ig kappa chain V-III region TEPC 124 (112 aa).

Residues 1-23 (DIVLTQSPASLAVSLGQRATISC) form a framework-1 region. A disulfide bridge connects residues cysteine 23 and cysteine 92. Residues 24-38 (RASZSVNWYGNSFMZ) form a complementarity-determining-1 region. Positions 39–53 (WYZZKPGZPPKLLIY) are framework-2. Residues 54–60 (RASNLZS) are complementarity-determining-2. Residues 61–92 (GIPARFSGSGSRTBFTLTIBPVZABDVATYFC) are framework-3. The tract at residues 93–101 (ZZSBZAPWT) is complementarity-determining-3. Residues 102 to 111 (FGSGTKLEIK) are framework-4.

The polypeptide is Ig kappa chain V-III region TEPC 124 (Mus musculus (Mouse)).